The chain runs to 353 residues: Sorbitol dehydrogenase (353 aa).

A Zn(2+)-binding site is contributed by Cys-45. Tyr-51 is a binding site for substrate. Zn(2+)-binding residues include His-70 and Glu-71. Glu-156 is a substrate binding site. NAD(+)-binding positions include Val-184, Asp-204, Arg-209, 271–273, and 296–298; these read VGL and IFR. Substrate is bound by residues Arg-298 and Tyr-299.

This sequence belongs to the zinc-containing alcohol dehydrogenase family. In terms of assembly, homotetramer. Zn(2+) serves as cofactor.

The enzyme catalyses keto-D-fructose + NADH + H(+) = D-sorbitol + NAD(+). It carries out the reaction xylitol + NAD(+) = D-xylulose + NADH + H(+). The catalysed reaction is L-iditol + NAD(+) = keto-L-sorbose + NADH + H(+). Its function is as follows. Polyol dehydrogenase that catalyzes the NAD(+)-dependent oxidation of various sugar alcohols. Is mostly active with D-sorbitol (D-glucitol), xylitol and L-iditol as substrates, leading to the C2-oxidized products D-fructose, D-xylulose and L-sorbose, respectively. The chain is Sorbitol dehydrogenase from Bacillus subtilis (strain 168).